The chain runs to 454 residues: tRNA modification GTPase MnmE (454 aa).

(6S)-5-formyl-5,6,7,8-tetrahydrofolate contacts are provided by Arg-23, Glu-80, and Lys-120. In terms of domain architecture, TrmE-type G spans 216-377 (GMKVVIAGKP…LRTHLKQSMG (162 aa)). Residue Asn-226 participates in K(+) binding. Residues 226-231 (NAGKSS), 245-251 (TAIAGTT), 270-273 (DTAG), and 335-338 (NKAD) contribute to the GTP site. Ser-230 provides a ligand contact to Mg(2+). Thr-245, Ile-247, and Thr-250 together coordinate K(+). Thr-251 is a binding site for Mg(2+). Residue Lys-454 participates in (6S)-5-formyl-5,6,7,8-tetrahydrofolate binding.

It belongs to the TRAFAC class TrmE-Era-EngA-EngB-Septin-like GTPase superfamily. TrmE GTPase family. As to quaternary structure, homodimer. Heterotetramer of two MnmE and two MnmG subunits. K(+) serves as cofactor.

Its subcellular location is the cytoplasm. Exhibits a very high intrinsic GTPase hydrolysis rate. Involved in the addition of a carboxymethylaminomethyl (cmnm) group at the wobble position (U34) of certain tRNAs, forming tRNA-cmnm(5)s(2)U34. This is tRNA modification GTPase MnmE from Sodalis glossinidius (strain morsitans).